Reading from the N-terminus, the 347-residue chain is Selenide, water dikinase (347 aa).

Residue cysteine 17 is part of the active site. ATP contacts are provided by residues lysine 20 and 48 to 50 (TRD). Aspartate 51 is a Mg(2+) binding site. ATP contacts are provided by residues aspartate 68, aspartate 91, and 139 to 141 (GHS). Aspartate 91 lines the Mg(2+) pocket. Aspartate 227 serves as a coordination point for Mg(2+).

The protein belongs to the selenophosphate synthase 1 family. Class I subfamily. In terms of assembly, homodimer. Mg(2+) serves as cofactor.

It carries out the reaction hydrogenselenide + ATP + H2O = selenophosphate + AMP + phosphate + 2 H(+). Its function is as follows. Synthesizes selenophosphate from selenide and ATP. This is Selenide, water dikinase from Enterobacter sp. (strain 638).